An 84-amino-acid polypeptide reads, in one-letter code: Turripeptide IX-01 (84 aa).

An N-terminal signal peptide occupies residues 1–21 (MGFYMLLTVALLLTSFMSVEA). Positions 22 to 39 (TPVDQAERSAMKESGLAH) are excised as a propeptide. Disulfide bonds link Cys-48-Cys-70, Cys-55-Cys-74, and Cys-60-Cys-81.

In terms of tissue distribution, expressed by the venom duct.

The protein resides in the secreted. This Gemmula speciosa (Splendid gem-turris) protein is Turripeptide IX-01.